Here is a 1485-residue protein sequence, read N- to C-terminus: ABC multidrug transporter I (1485 aa).

Disordered stretches follow at residues 1–57 (MDEK…EEFS) and 75–111 (KQIS…ALRG). Residues 8 to 24 (SESSNGSDVDSLSTASA) show a composition bias toward polar residues. N-linked (GlcNAc...) asparagine glycosylation occurs at Asn-12. The span at 85 to 95 (GKTEDVERSDS) shows a compositional bias: basic and acidic residues. Asn-132, Asn-335, and Asn-451 each carry an N-linked (GlcNAc...) asparagine glycan. The region spanning 163-411 (MHMLGYGKKG…FESLGFKERP (249 aa)) is the ABC transporter 1 domain. The next 7 membrane-spanning stretches (helical) occupy residues 522–542 (FAQT…GTVW), 556–576 (GGLL…ELVS), 600–620 (IAQI…FSII), 623–643 (FMCG…IIVL), 664–684 (YAMK…GYLI), 691–711 (EWLR…ALMV), and 774–794 (FGIM…HGET). The ABC transporter 2 domain maps to 846–1089 (FTWEDVCYDV…LLDYFRRNGA (244 aa)). 882–889 (GASGAGKT) contacts ATP. The next 5 membrane-spanning stretches (helical) occupy residues 1184–1204 (YGFT…LAFL), 1211–1231 (ASLQ…AIIL), 1268–1288 (LPYS…IPGF), 1299–1319 (FLMV…ISAL), and 1325–1345 (IASQ…GVAI). Residues Asn-1396 and Asn-1418 are each glycosylated (N-linked (GlcNAc...) asparagine). A helical transmembrane segment spans residues 1449 to 1469 (LGIFLAFIGSNLIILFLAVSF).

Belongs to the ABC transporter superfamily. ABCG family. PDR (TC 3.A.1.205) subfamily.

The protein resides in the cell membrane. It carries out the reaction fluconazole(in) + ATP + H2O = fluconazole(out) + ADP + phosphate + H(+). The efflux inhibitor FK506 does not impair the transport activity. Functionally, ABC efflux transporter that confers resistance to fluconazole (FLC) but shows no resistance to other azoles. Is also able to transport rhodamine 6G (R-6G), a known substrate for many ABC transporters. The polypeptide is ABC multidrug transporter I (Aspergillus fumigatus (strain ATCC MYA-4609 / CBS 101355 / FGSC A1100 / Af293) (Neosartorya fumigata)).